Consider the following 997-residue polypeptide: Protein Smaug (997 aa).

The segment covering 1–37 (MKYATGTDNAMTSGISGQTNNSNSASTEMQPTTSTPT) has biased composition (polar residues). Disordered regions lie at residues 1-69 (MKYA…QSQP) and 329-370 (LCPA…GSSS). Low complexity-rich tracts occupy residues 44-69 (TPTA…QSQP) and 329-338 (LCPASGSRSS). 2 positions are modified to phosphoserine: Ser-564 and Ser-575. The segment at 583–763 (EFKPNYIKFH…KDLKFKLSKM (181 aa)) is interaction with cup. The SAM domain maps to 600 to 654 (GIGLWLKSLRLHKYIELFKNMTYEEMLLITEDFLQSVGVTKGASHKLALCIEKLK). Disordered regions lie at residues 773–892 (HVKP…MQQM) and 944–972 (GSSD…TSAE). Composition is skewed to polar residues over residues 802 to 822 (NGSN…NFSL) and 854 to 864 (HQPQYKSSSYP). Phosphoserine is present on Ser-970.

It belongs to the SMAUG family. Interacts with oskar (osk). Binds to the 3'-UTR of nos. Interacts with cup, which in turn recruits eIF4-E, leading to an indirect interaction between smg and eIF4-E that prevents mRNA translation.

It localises to the cytoplasm. Translation regulator that binds to the 3'-UTR of specific mRNAs such as nanos (nos) and prevent their translation. Prevents translation of unlocalized nos in the bulk cytoplasm via the recruitment of cup. The sequence is that of Protein Smaug from Drosophila erecta (Fruit fly).